Here is a 422-residue protein sequence, read N- to C-terminus: Synaptotagmin-1 (422 aa).

Residues 1–57 are Vesicular-facing; that stretch reads MVSESHHEALAAPPVTTVATVLPSNATEPASPGEGKEDAFSKLKEKFMNELHKIPLP. Asparagine 25 carries N-linked (GlcNAc...) asparagine glycosylation. Residues 58–80 form a helical membrane-spanning segment; it reads PWALIAIAIVAVLLVLTCCFCIC. S-palmitoyl cysteine attachment occurs at residues cysteine 75, cysteine 76, cysteine 78, cysteine 80, and cysteine 83. Residues 81 to 422 are Cytoplasmic-facing; that stretch reads KKCLFKKKNK…EVDAMLAVKK (342 aa). The segment at 113-142 is disordered; it reads TMKDQALKDDDAETGLTDGEEKEEPKEEEK. Positions 122-134 are enriched in acidic residues; sequence DDAETGLTDGEEK. Threonine 129 is subject to Phosphothreonine. Residues 136 to 382 are phospholipid binding; sequence EPKEEEKLGK…AIGKVFVGYN (247 aa). The 120-residue stretch at 142–261 folds into the C2 1 domain; the sequence is KLGKLQYSLD…DFGHVTEEWR (120 aa). The Ca(2+) site is built by leucine 172, aspartate 173, and aspartate 179. Tyrosine 230 carries the post-translational modification Phosphotyrosine. Ca(2+) is bound by residues aspartate 231, phenylalanine 232, aspartate 233, serine 236, lysine 237, and aspartate 239. Serine 265 carries the phosphoserine modification. In terms of domain architecture, C2 2 spans 273 to 406; it reads KLGDICFSLR…NPRRPIAQWH (134 aa). The Ca(2+) site is built by aspartate 304 and aspartate 310. Residues serine 343 and serine 345 each carry the phosphoserine modification. Aspartate 364, aspartate 366, and aspartate 372 together coordinate Ca(2+).

This sequence belongs to the synaptotagmin family. In terms of assembly, homotetramer. Heterodimer; heterodimerizes with SYT2 in presence of calcium. Interacts with SCAMP5. Interacts with STON2. Forms a complex with SV2B, syntaxin 1 and SNAP25. Interacts with SV2A, SV2B and SV2C. Interacts with RIMS1. Interacts with PRRT2. Interacts with DNAJC5 in a phosphorylation-dependent manner. Interacts (via N-terminus) with RAB3A. Interacts with SYT12. Interacts with calmodulin. Interacts with DNM1 (via C-terminal proline-rich domain (PRD)); this interaction facilitates vesicle fission during clathrin-mediated endocytosis (CME). Ca(2+) is required as a cofactor. Post-translationally, glycosylated. Expressed in melanocytes.

It localises to the cytoplasmic vesicle. The protein localises to the secretory vesicle membrane. Its subcellular location is the secretory vesicle. It is found in the synaptic vesicle membrane. The protein resides in the chromaffin granule membrane. It localises to the cytoplasm. Calcium sensor that participates in triggering neurotransmitter release at the synapse. May have a regulatory role in the membrane interactions during trafficking of synaptic vesicles at the active zone of the synapse. It binds acidic phospholipids with a specificity that requires the presence of both an acidic head group and a diacyl backbone. A Ca(2+)-dependent interaction between synaptotagmin and putative receptors for activated protein kinase C has also been reported. It can bind to at least three additional proteins in a Ca(2+)-independent manner; these are neurexins, syntaxin and AP2. Plays a role in dendrite formation by melanocytes. The sequence is that of Synaptotagmin-1 from Homo sapiens (Human).